A 275-amino-acid polypeptide reads, in one-letter code: Hydroxyethylthiazole kinase (275 aa).

Methionine 53 is a binding site for substrate. 2 residues coordinate ATP: arginine 128 and serine 174. Glycine 201 lines the substrate pocket.

Belongs to the Thz kinase family. Mg(2+) is required as a cofactor.

The enzyme catalyses 5-(2-hydroxyethyl)-4-methylthiazole + ATP = 4-methyl-5-(2-phosphooxyethyl)-thiazole + ADP + H(+). Its pathway is cofactor biosynthesis; thiamine diphosphate biosynthesis; 4-methyl-5-(2-phosphoethyl)-thiazole from 5-(2-hydroxyethyl)-4-methylthiazole: step 1/1. Catalyzes the phosphorylation of the hydroxyl group of 4-methyl-5-beta-hydroxyethylthiazole (THZ). This chain is Hydroxyethylthiazole kinase, found in Kineococcus radiotolerans (strain ATCC BAA-149 / DSM 14245 / SRS30216).